Consider the following 644-residue polypeptide: Phosphatidylinositol polyphosphate 5-phosphatase type IV (644 aa).

Positions 1 to 193 (MPSKAENLRP…RLPSLLPPRP (193 aa)) are disordered. 8 tandem repeats follow at residues 10–13 (PSEP), 15–18 (PQPP), 28–31 (PGAP), 39–42 (PPDV), 55–58 (PATP), 69–71 (PIA), 72–74 (PRP), and 75–78 (PARP). Residues 10–242 (PSEPAPQPPE…SLGPGRPRSP (233 aa)) form a 13 X 4 AA repeats of P-X-X-P region. The segment covering 78–90 (PRLERALSLDDKG) has biased composition (basic and acidic residues). Residue Ser99 is modified to Phosphoserine. Residues 107 to 118 (NGTSPSRGSVQS) show a composition bias toward polar residues. Residues 121-124 (PGAP) form repeat 9. Residues 152 to 163 (GSPSSGGNPLSG) are compositionally biased toward low complexity. 4 tandem repeats follow at residues 169–172 (PNLP), 183–185 (PRL), 190–193 (PPRP), and 236–239 (PGRP). Ser241 and Ser256 each carry phosphoserine. Cysteine methyl ester is present on Cys641. Cys641 carries the S-farnesyl cysteine lipid modification. Positions 642 to 644 (SVS) are cleaved as a propeptide — removed in mature form.

It belongs to the inositol polyphosphate 5-phosphatase family. Interacts (when prenylated) with PDE6D; this is important for normal location in cilia.

It localises to the cytoplasm. It is found in the cytoskeleton. The protein localises to the cilium axoneme. Its subcellular location is the golgi apparatus. The protein resides in the golgi stack membrane. It localises to the cell membrane. It is found in the cell projection. The protein localises to the ruffle. Its subcellular location is the nucleus. The enzyme catalyses a 1,2-diacyl-sn-glycero-3-phospho-(1D-myo-inositol-4,5-bisphosphate) + H2O = a 1,2-diacyl-sn-glycero-3-phospho-(1D-myo-inositol 4-phosphate) + phosphate. It catalyses the reaction a 1,2-diacyl-sn-glycero-3-phospho-(1D-myo-inositol-3,4,5-trisphosphate) + H2O = a 1,2-diacyl-sn-glycero-3-phospho-(1D-myo-inositol-3,4-bisphosphate) + phosphate. It carries out the reaction a 1,2-diacyl-sn-glycero-3-phospho-(1D-myo-inositol-3,5-bisphosphate) + H2O = a 1,2-diacyl-sn-glycero-3-phospho-(1D-myo-inositol-3-phosphate) + phosphate. Its function is as follows. Phosphatidylinositol (PtdIns) phosphatase that specifically hydrolyzes the 5-phosphate of phosphatidylinositol-3,4,5-trisphosphate (PtdIns(3,4,5)P3), phosphatidylinositol 4,5-bisphosphate(PtdIns(4,5)P2) and phosphatidylinositol 3,5-bisphosphate (PtdIns(3,5)P2). Specific for lipid substrates, inactive towards water soluble inositol phosphates. Plays an essential role in the primary cilium by controlling ciliary growth and phosphoinositide 3-kinase (PI3K) signaling and stability. This is Phosphatidylinositol polyphosphate 5-phosphatase type IV (INPP5E) from Pan troglodytes (Chimpanzee).